We begin with the raw amino-acid sequence, 130 residues long: Small ribosomal subunit protein uS9 (130 aa).

Belongs to the universal ribosomal protein uS9 family.

The protein is Small ribosomal subunit protein uS9 of Verminephrobacter eiseniae (strain EF01-2).